The primary structure comprises 808 residues: DNA gyrase subunit B (808 aa).

The Toprim domain maps to 429 to 544 (SELFIVEGDS…KGYLYIAQPP (116 aa)). Residues glutamate 435, aspartate 509, and aspartate 511 each contribute to the Mg(2+) site.

The protein belongs to the type II topoisomerase GyrB family. As to quaternary structure, heterotetramer, composed of two GyrA and two GyrB chains. In the heterotetramer, GyrA contains the active site tyrosine that forms a transient covalent intermediate with DNA, while GyrB binds cofactors and catalyzes ATP hydrolysis. The cofactor is Mg(2+). It depends on Mn(2+) as a cofactor. Requires Ca(2+) as cofactor.

The protein localises to the cytoplasm. The catalysed reaction is ATP-dependent breakage, passage and rejoining of double-stranded DNA.. Functionally, a type II topoisomerase that negatively supercoils closed circular double-stranded (ds) DNA in an ATP-dependent manner to modulate DNA topology and maintain chromosomes in an underwound state. Negative supercoiling favors strand separation, and DNA replication, transcription, recombination and repair, all of which involve strand separation. Also able to catalyze the interconversion of other topological isomers of dsDNA rings, including catenanes and knotted rings. Type II topoisomerases break and join 2 DNA strands simultaneously in an ATP-dependent manner. The polypeptide is DNA gyrase subunit B (Rickettsia bellii (strain RML369-C)).